The primary structure comprises 205 residues: Imidazoleglycerol-phosphate dehydratase (205 aa).

It belongs to the imidazoleglycerol-phosphate dehydratase family.

It is found in the cytoplasm. The catalysed reaction is D-erythro-1-(imidazol-4-yl)glycerol 3-phosphate = 3-(imidazol-4-yl)-2-oxopropyl phosphate + H2O. It functions in the pathway amino-acid biosynthesis; L-histidine biosynthesis; L-histidine from 5-phospho-alpha-D-ribose 1-diphosphate: step 6/9. This chain is Imidazoleglycerol-phosphate dehydratase, found in Chloroflexus aggregans (strain MD-66 / DSM 9485).